Consider the following 129-residue polypeptide: Small ribosomal subunit protein uS11 (129 aa).

Belongs to the universal ribosomal protein uS11 family. In terms of assembly, part of the 30S ribosomal subunit. Interacts with proteins S7 and S18. Binds to IF-3.

Located on the platform of the 30S subunit, it bridges several disparate RNA helices of the 16S rRNA. Forms part of the Shine-Dalgarno cleft in the 70S ribosome. The polypeptide is Small ribosomal subunit protein uS11 (Lactobacillus delbrueckii subsp. bulgaricus (strain ATCC 11842 / DSM 20081 / BCRC 10696 / JCM 1002 / NBRC 13953 / NCIMB 11778 / NCTC 12712 / WDCM 00102 / Lb 14)).